The sequence spans 237 residues: Orotidine 5'-phosphate decarboxylase (237 aa).

Residues Asp-11, Lys-34, 61-70 (DLKLHDIPNT), Thr-124, Arg-186, Gln-195, Gly-215, and Arg-216 each bind substrate. The Proton donor role is filled by Lys-63.

Belongs to the OMP decarboxylase family. Type 1 subfamily. In terms of assembly, homodimer.

The enzyme catalyses orotidine 5'-phosphate + H(+) = UMP + CO2. Its pathway is pyrimidine metabolism; UMP biosynthesis via de novo pathway; UMP from orotate: step 2/2. In terms of biological role, catalyzes the decarboxylation of orotidine 5'-monophosphate (OMP) to uridine 5'-monophosphate (UMP). The chain is Orotidine 5'-phosphate decarboxylase from Lactococcus lactis subsp. cremoris (strain MG1363).